The chain runs to 83 residues: Vitellogenesis-inhibiting hormone (83 aa).

3 disulfides stabilise this stretch: cysteine 15-cysteine 52, cysteine 32-cysteine 48, and cysteine 35-cysteine 61.

Found in the sinus glands of both male and female. Found also in the brain; the neuroendocrine structures of the protocerebrum.

It is found in the secreted. Functionally, inhibits secondary vitellogenesis in females. Has no hyperglycemic or molt-inhibiting activity. The chain is Vitellogenesis-inhibiting hormone from Armadillidium vulgare (Pillbug).